We begin with the raw amino-acid sequence, 312 residues long: Olfactory receptor 6C75 (312 aa).

The Extracellular portion of the chain corresponds to 1–23 (MRNSTAVTDFILLGLTSDPQWQV). Residue Asn3 is glycosylated (N-linked (GlcNAc...) asparagine). The helical transmembrane segment at 24–44 (VLFIFLLVTYMLSVTGNLIII) threads the bilayer. At 45 to 63 (TLTLSDPHLQTPMYFFLRN) the chain is on the cytoplasmic side. The chain crosses the membrane as a helical span at residues 64-84 (FSFLEISFTSVCIPRFLVTVV). At 85-95 (TGNRTISYNGC) the chain is on the extracellular side. Cys95 and Cys177 are joined by a disulfide. A helical membrane pass occupies residues 96–116 (VAQLFFFIFLGVTEFYLLAAM). Topologically, residues 117–140 (SYDRCMAICKPLHYTIIMSTRVCT) are cytoplasmic. The helical transmembrane segment at 141 to 161 (LLVFSSWLAGFLIIFPPVMLL) threads the bilayer. Residues 162-194 (LQLDFCASNVIDHFICDSSPMLQLSCTNTHFLE) are Extracellular-facing. Residues 195 to 215 (LMAFFLAVVTLMVTLTLVILS) form a helical membrane-spanning segment. At 216-237 (YTNIIRTILKIPSMSQRKKAFS) the chain is on the cytoplasmic side. Residues 238 to 258 (TCSSHMIVVSISYSSCIFMYI) form a helical membrane-spanning segment. The Extracellular segment spans residues 259–269 (KTSARERVTLS). The chain crosses the membrane as a helical span at residues 270–290 (KGVAVLNTSVAPLLNPFIYTL). Residues 291–312 (RNKQVKQAFKSMVQKMIFSLNK) are Cytoplasmic-facing.

Belongs to the G-protein coupled receptor 1 family.

The protein localises to the cell membrane. Its function is as follows. Odorant receptor. This is Olfactory receptor 6C75 (OR6C75) from Homo sapiens (Human).